A 253-amino-acid chain; its full sequence is Dehydration-responsive element-binding protein 1D (253 aa).

Polar residues predominate over residues 1–22; sequence MEKNTAASGQLMTSSAEATPSS. Residues 1–31 form a disordered region; it reads MEKNTAASGQLMTSSAEATPSSPKRPAGRTK. The AP2/ERF DNA-binding region spans 39-98; the sequence is VFRGVRWRGCAGRWVCKVRVPGSRGDRFWIGTSDTAEETARTHDAAMLALCGASASLNFA. Residues 131 to 153 form a disordered region; the sequence is RRVPAPGRGSTATATATSGDAAS. Low complexity predominate over residues 134-153; it reads PAPGRGSTATATATSGDAAS.

Belongs to the AP2/ERF transcription factor family. ERF subfamily.

The protein localises to the nucleus. Transcriptional activator that binds specifically to the DNA sequence 5'-[AG]CCGAC-3'. Binding to the C-repeat/DRE element mediates high salinity- and dehydration-inducible transcription. This chain is Dehydration-responsive element-binding protein 1D (DREB1D), found in Oryza sativa subsp. indica (Rice).